Reading from the N-terminus, the 492-residue chain is Dipeptide permease D (492 aa).

The next 13 helical transmembrane spans lie at 14-34 (VVALQIWEYFSFYGMRALLIL), 49-69 (ALFSAYCSLVYVTPILGGYLA), 91-111 (LVLGASETAPVFLYLSLAIIV), 138-158 (GGFSLMYAAGNIGSIIAPIAC), 167-187 (WAMGFALAAIGMVAGLVIFLC), 212-232 (NWGWLLVLLVTAPLLIAVLFW), 236-256 (SVYALIVATVIGLAVLARIYL), 269-289 (LIVVLTAFSLLFWAFAQQGGS), 312-332 (MFQSVNAFAVMLCGMVLAWLV), 344-364 (IWGKFALGLGLMSAGFCILTL), 379-399 (LMVLGLAVMGFAELFIDPVAM), 413-433 (VLTGIYMLLSGAIANYLAGVI), and 458-478 (VFSQITWGALACVGVVLVIWL).

Belongs to the major facilitator superfamily. Proton-dependent oligopeptide transporter (POT/PTR) (TC 2.A.17) family. DtpD subfamily.

It is found in the cell inner membrane. In terms of biological role, probable proton-dependent permease that transports dipeptides. The polypeptide is Dipeptide permease D (Klebsiella pneumoniae (strain 342)).